Reading from the N-terminus, the 77-residue chain is Acyl carrier protein (77 aa).

One can recognise a Carrier domain in the interval 1 to 76; that stretch reads MENFDKVKDI…DAVKYINSLE (76 aa). S36 carries the O-(pantetheine 4'-phosphoryl)serine modification.

This sequence belongs to the acyl carrier protein (ACP) family. Post-translationally, 4'-phosphopantetheine is transferred from CoA to a specific serine of apo-ACP by AcpS. This modification is essential for activity because fatty acids are bound in thioester linkage to the sulfhydryl of the prosthetic group.

It is found in the cytoplasm. Its pathway is lipid metabolism; fatty acid biosynthesis. Carrier of the growing fatty acid chain in fatty acid biosynthesis. This chain is Acyl carrier protein, found in Staphylococcus epidermidis (strain ATCC 12228 / FDA PCI 1200).